The sequence spans 279 residues: Coiled-coil domain-containing protein 117 (279 aa).

The disordered stretch occupies residues 1–82 (MAALGRPFSG…REEEEDDDCP (82 aa)). Residue Arg48 is modified to Omega-N-methylarginine. Position 53 is a phosphoserine (Ser53). Positions 63-72 (VSVHCKKKHK) are enriched in basic residues. Residues 141 to 168 (QCEVARRKLQEIEDRIIDEDEEVEADRN) adopt a coiled-coil conformation. The interval 217–279 (LLSDKPKPSS…ATSTEEEMEL (63 aa)) is disordered. Polar residues-rich tracts occupy residues 224–235 (PSSNTKNYTGES) and 262–272 (SLYNSLETATS).

As to quaternary structure, interacts with CIAO2B; the interaction is direct. Interacts with MMS19; the interaction is indirect.

The protein resides in the cytoplasm. Its subcellular location is the cytoskeleton. It localises to the spindle. The protein localises to the nucleus. Functionally, facilitates DNA repair, cell cycle progression, and cell proliferation through its interaction with CIAO2B. The sequence is that of Coiled-coil domain-containing protein 117 from Homo sapiens (Human).